A 364-amino-acid polypeptide reads, in one-letter code: Chorismate synthase (364 aa).

The disordered stretch occupies residues 41 to 60 (MQHDLDRRRPGTSRYTTARR). Arginine 48 and arginine 54 together coordinate NADP(+). FMN-binding positions include 125–127 (RSS), 238–239 (NA), glycine 278, 293–297 (KPTSS), and arginine 319.

Belongs to the chorismate synthase family. In terms of assembly, homotetramer. It depends on FMNH2 as a cofactor.

The enzyme catalyses 5-O-(1-carboxyvinyl)-3-phosphoshikimate = chorismate + phosphate. The protein operates within metabolic intermediate biosynthesis; chorismate biosynthesis; chorismate from D-erythrose 4-phosphate and phosphoenolpyruvate: step 7/7. Its function is as follows. Catalyzes the anti-1,4-elimination of the C-3 phosphate and the C-6 proR hydrogen from 5-enolpyruvylshikimate-3-phosphate (EPSP) to yield chorismate, which is the branch point compound that serves as the starting substrate for the three terminal pathways of aromatic amino acid biosynthesis. This reaction introduces a second double bond into the aromatic ring system. The polypeptide is Chorismate synthase (Shewanella sp. (strain MR-4)).